Reading from the N-terminus, the 217-residue chain is Zinc finger CCHC-type and RNA-binding motif-containing protein 1 (217 aa).

The 79-residue stretch at 10 to 88 folds into the RRM domain; that stretch reads STVYVSNLPF…RVIKASIAID (79 aa). The CCHC-type zinc-finger motif lies at 105–122; it reads SKCYECGESGHLSYACPK. A disordered region spans residues 120–217; that stretch reads CPKNMLGERE…YFSDEEELSD (98 aa). A compositionally biased stretch (acidic residues) spans 145-163; sequence PEEEIEEVEVSEEEGEDPA. Residues serine 155, serine 210, and serine 216 each carry the phosphoserine modification.

As to quaternary structure, component of the U11/U12 snRNPs that are part of the U12-type spliceosome. Interacts with ZRSR1.

It localises to the nucleus. Its subcellular location is the nucleoplasm. The protein is Zinc finger CCHC-type and RNA-binding motif-containing protein 1 (Zcrb1) of Rattus norvegicus (Rat).